The following is a 104-amino-acid chain: Integration host factor subunit beta (104 aa).

Over residues 83–95 (GKEMRERLNRDSG) the composition is skewed to basic and acidic residues. The segment at 83–104 (GKEMRERLNRDSGDDAPTSDTA) is disordered.

The protein belongs to the bacterial histone-like protein family. As to quaternary structure, heterodimer of an alpha and a beta chain.

Functionally, this protein is one of the two subunits of integration host factor, a specific DNA-binding protein that functions in genetic recombination as well as in transcriptional and translational control. This is Integration host factor subunit beta from Rhodopseudomonas palustris (strain ATCC BAA-98 / CGA009).